A 437-amino-acid polypeptide reads, in one-letter code: UDP-N-acetylmuramoylalanine--D-glutamate ligase (437 aa).

Position 115–121 (115–121 (GSNGKST)) interacts with ATP.

Belongs to the MurCDEF family.

It is found in the cytoplasm. It catalyses the reaction UDP-N-acetyl-alpha-D-muramoyl-L-alanine + D-glutamate + ATP = UDP-N-acetyl-alpha-D-muramoyl-L-alanyl-D-glutamate + ADP + phosphate + H(+). It participates in cell wall biogenesis; peptidoglycan biosynthesis. In terms of biological role, cell wall formation. Catalyzes the addition of glutamate to the nucleotide precursor UDP-N-acetylmuramoyl-L-alanine (UMA). This Vibrio parahaemolyticus serotype O3:K6 (strain RIMD 2210633) protein is UDP-N-acetylmuramoylalanine--D-glutamate ligase.